A 950-amino-acid polypeptide reads, in one-letter code: Protocadherin alpha-1 (950 aa).

Residues 1–29 (MVFSRRGGLGARDLLLWLLLLAAWEVGSG) form the signal peptide. 6 consecutive Cadherin domains span residues 30-133 (QLHY…PPVF), 157-242 (AADA…APLF), 243-350 (DQAV…APEL), 351-455 (AVTS…APAF), 456-565 (AQPE…APAL), and 588-678 (GHVV…APKA). The Extracellular segment spans residues 30–697 (QLHYSIPEEA…GPEAALVDVN (668 aa)). N-linked (GlcNAc...) asparagine glycosylation is found at asparagine 257 and asparagine 265. Asparagine 548 carries N-linked (GlcNAc...) asparagine glycosylation. The chain crosses the membrane as a helical span at residues 698 to 718 (VYLIIAICAVSSLLVLTLLLY). The Cytoplasmic portion of the chain corresponds to 719–950 (TALRCSVPPT…GNSTTDNSDQ (232 aa)). PXXP repeat units lie at residues 734–737 (PGKP), 799–802 (PRQP), 832–835 (PGGP), 873–876 (PGNP), and 891–894 (PGSP). The tract at residues 734 to 894 (PGKPTLVCSS…PDKFIIPGSP (161 aa)) is 5 X 4 AA repeats of P-X-X-P. Disordered stretches follow at residues 752-808 (QQRR…DWRY), 828-856 (LRAG…EVSP), and 871-890 (YGPG…KFII). The disordered stretch occupies residues 900 to 950 (RQEPTNSQIDKSDFITFGKKEETKKKKKKKKGNKTQEKKEKGNSTTDNSDQ). A compositionally biased stretch (basic and acidic residues) spans 909–923 (DKSDFITFGKKEETK).

It localises to the cell membrane. The protein localises to the secreted. Potential calcium-dependent cell-adhesion protein. May be involved in the establishment and maintenance of specific neuronal connections in the brain. The chain is Protocadherin alpha-1 (PCDHA1) from Homo sapiens (Human).